The following is a 141-amino-acid chain: ATP synthase epsilon chain (141 aa).

Belongs to the ATPase epsilon chain family. In terms of assembly, F-type ATPases have 2 components, CF(1) - the catalytic core - and CF(0) - the membrane proton channel. CF(1) has five subunits: alpha(3), beta(3), gamma(1), delta(1), epsilon(1). CF(0) has three main subunits: a, b and c.

The protein localises to the cell inner membrane. In terms of biological role, produces ATP from ADP in the presence of a proton gradient across the membrane. The polypeptide is ATP synthase epsilon chain (Pseudomonas fluorescens (strain ATCC BAA-477 / NRRL B-23932 / Pf-5)).